The chain runs to 422 residues: MRVTGLERKILVIVGDGMADRAVPELDGKTPLQAADTPNMDRLAREGSVGLLDPIRPGVRPGSDTAHLTLLGYDPFEVYPGRGPLEALGAGVEVRPGDVAFRCNFATAEERNGELVVVDRRAGRINEDEGTPKLAETINEEVDLPVEFEFKEAVGHRAVLVLRGGDLSADVTDADPKRVGKPVKDVKPTSDDPAAARTAEIVNEFVRKAYEVLKDHPVNRERERQGKPPANVILPRGAGQLEEVEPFSDRYGMSGAVVAGASLIKGIGRMLGMDVPEDEAITGRKDTDLKRKAELALEALDDHDLVLVNFNAVDEAGHDGDARGKVEMIERMDRELVGTLLEGIDPEETVVCLTADHSTPVAVGDHTADPVPVAIWTADARRDPVEEYDEISAARGCLGRFSGLHLLNVLRDLADRIEKFGA.

Residues Asp-173–Ala-194 are disordered. The span at Ala-174–Ser-190 shows a compositional bias: basic and acidic residues.

It belongs to the BPG-independent phosphoglycerate mutase family. A-PGAM subfamily.

The catalysed reaction is (2R)-2-phosphoglycerate = (2R)-3-phosphoglycerate. The protein operates within carbohydrate degradation; glycolysis; pyruvate from D-glyceraldehyde 3-phosphate: step 3/5. Its function is as follows. Catalyzes the interconversion of 2-phosphoglycerate and 3-phosphoglycerate. The protein is 2,3-bisphosphoglycerate-independent phosphoglycerate mutase of Methanopyrus kandleri (strain AV19 / DSM 6324 / JCM 9639 / NBRC 100938).